The sequence spans 195 residues: Interferon omega-1 (195 aa).

The or 23 in some molecules signal peptide spans Met1 to Ser21. 2 cysteine pairs are disulfide-bonded: Cys24–Cys122 and Cys52–Cys162. N-linked (GlcNAc...) asparagine glycosylation occurs at Asn101.

The protein belongs to the alpha/beta interferon family.

It localises to the secreted. The protein is Interferon omega-1 (IFNW1) of Homo sapiens (Human).